The chain runs to 881 residues: DNA mismatch repair protein MutS (881 aa).

632–639 (GPNMGGKS) contacts ATP.

The protein belongs to the DNA mismatch repair MutS family.

Its function is as follows. This protein is involved in the repair of mismatches in DNA. It is possible that it carries out the mismatch recognition step. This protein has a weak ATPase activity. In Chelativorans sp. (strain BNC1), this protein is DNA mismatch repair protein MutS.